The following is a 314-amino-acid chain: Methionyl-tRNA formyltransferase (314 aa).

110–113 (SLLP) contributes to the (6S)-5,6,7,8-tetrahydrofolate binding site.

It belongs to the Fmt family.

It carries out the reaction L-methionyl-tRNA(fMet) + (6R)-10-formyltetrahydrofolate = N-formyl-L-methionyl-tRNA(fMet) + (6S)-5,6,7,8-tetrahydrofolate + H(+). Functionally, attaches a formyl group to the free amino group of methionyl-tRNA(fMet). The formyl group appears to play a dual role in the initiator identity of N-formylmethionyl-tRNA by promoting its recognition by IF2 and preventing the misappropriation of this tRNA by the elongation apparatus. This Lactobacillus gasseri (strain ATCC 33323 / DSM 20243 / BCRC 14619 / CIP 102991 / JCM 1131 / KCTC 3163 / NCIMB 11718 / NCTC 13722 / AM63) protein is Methionyl-tRNA formyltransferase.